We begin with the raw amino-acid sequence, 144 residues long: MLMPKRVKYRREHRGKMRGRAKGGTEIAFGEFGLQAQAASWITNRQIEAARRAMTRYMKRGGKVWIKIFPSKPYTAKPLEVRMGSGKGAPEGWVAVVKPGKIMFEIAGVSEEVAREALRLAAHKLPVKCKFVKREENGGESNEN.

This sequence belongs to the universal ribosomal protein uL16 family. Part of the 50S ribosomal subunit.

In terms of biological role, binds 23S rRNA and is also seen to make contacts with the A and possibly P site tRNAs. The protein is Large ribosomal subunit protein uL16 of Bacillus anthracis (strain A0248).